The sequence spans 633 residues: Glutathione S-transferase C-terminal domain-containing protein (633 aa).

The 203-residue stretch at 130–332 (LGFKKTCLKA…QEVPGVKTAA (203 aa)) folds into the GST C-terminal domain. The disordered stretch occupies residues 191–233 (NDDKLRRQKLKQQKADGVGPPLTKGKAKSKVHTQETSEGLDSS). The span at 224-233 (QETSEGLDSS) shows a compositional bias: polar residues. Phosphoserine is present on serine 233.

This sequence belongs to the GSTCD family. In terms of tissue distribution, widely expressed in cell types relevant to airway function, including airway smooth muscle cells and epithelial cells.

The protein resides in the cytoplasm. This is Glutathione S-transferase C-terminal domain-containing protein (GSTCD) from Homo sapiens (Human).